Reading from the N-terminus, the 550-residue chain is Glucose-6-phosphate isomerase (550 aa).

E356 serves as the catalytic Proton donor. Catalysis depends on residues H387 and K515.

Belongs to the GPI family.

It is found in the cytoplasm. The enzyme catalyses alpha-D-glucose 6-phosphate = beta-D-fructose 6-phosphate. It participates in carbohydrate biosynthesis; gluconeogenesis. The protein operates within carbohydrate degradation; glycolysis; D-glyceraldehyde 3-phosphate and glycerone phosphate from D-glucose: step 2/4. Catalyzes the reversible isomerization of glucose-6-phosphate to fructose-6-phosphate. The chain is Glucose-6-phosphate isomerase from Vibrio cholerae serotype O1 (strain ATCC 39315 / El Tor Inaba N16961).